Reading from the N-terminus, the 78-residue chain is Leukemia-associated protein 1 (78 aa).

Functionally, may act as a tumor suppressor. In Homo sapiens (Human), this protein is Leukemia-associated protein 1 (DLEU1).